We begin with the raw amino-acid sequence, 225 residues long: Protein ERP3 (225 aa).

Positions 1-23 (MSNLCVLFFQFFFLAQFFAEASP) are cleaved as a signal peptide. Residues 24 to 195 (LTFELNKGRK…STEHRIVMFS (172 aa)) are Lumenal-facing. In terms of domain architecture, GOLD spans 33 to 172 (KECLYTLTPE…LHVLERNIQY (140 aa)). A compositionally biased stretch (basic residues) spans 129-138 (ERRKARKAQR). The disordered stretch occupies residues 129-149 (ERRKARKAQRNLRDSKTDPLQ). A helical membrane pass occupies residues 196 to 216 (IYGILLIIGMSCAQIAILEFI). The Cytoplasmic segment spans residues 217 to 225 (FRESRKHNV).

This sequence belongs to the EMP24/GP25L family.

It is found in the endoplasmic reticulum membrane. In terms of biological role, involved in vesicular protein trafficking. The sequence is that of Protein ERP3 (ERP3) from Saccharomyces cerevisiae (strain ATCC 204508 / S288c) (Baker's yeast).